A 417-amino-acid polypeptide reads, in one-letter code: Gamma-glutamyl phosphate reductase (417 aa).

It belongs to the gamma-glutamyl phosphate reductase family.

The protein localises to the cytoplasm. The catalysed reaction is L-glutamate 5-semialdehyde + phosphate + NADP(+) = L-glutamyl 5-phosphate + NADPH + H(+). It participates in amino-acid biosynthesis; L-proline biosynthesis; L-glutamate 5-semialdehyde from L-glutamate: step 2/2. In terms of biological role, catalyzes the NADPH-dependent reduction of L-glutamate 5-phosphate into L-glutamate 5-semialdehyde and phosphate. The product spontaneously undergoes cyclization to form 1-pyrroline-5-carboxylate. The sequence is that of Gamma-glutamyl phosphate reductase from Escherichia coli O8 (strain IAI1).